The sequence spans 557 residues: Acid-sensing ion channel 1B (557 aa).

The Cytoplasmic portion of the chain corresponds to 1-98 (MVRITCTISF…SIRQGLWALV (98 aa)). A compositionally biased stretch (basic and acidic residues) spans 36-45 (KDGEQGKYQE). Residues 36 to 57 (KDGEQGKYQEEGDDPDAYDGPE) form a disordered region. Positions 46–57 (EGDDPDAYDGPE) are enriched in acidic residues. A helical transmembrane segment spans residues 99–115 (FLLAISMFLLQVVDRVI). At 116-460 (YYLQYDYVTL…ETIEQKKAYE (345 aa)) the chain is on the extracellular side. N-linked (GlcNAc...) asparagine glycans are attached at residues Asn133 and Asn194. 7 disulfide bridges follow: Cys142/Cys229, Cys207/Cys214, Cys325/Cys400, Cys343/Cys396, Cys347/Cys394, Cys356/Cys378, and Cys358/Cys370. N-linked (GlcNAc...) asparagine glycans are attached at residues Asn401 and Asn428. A discontinuously helical membrane pass occupies residues 461–491 (LAGLLGDIGGQMGLFIGASILTILELFDYLY). Residues 477–479 (GAS) carry the GAS motif; ion selectivity filter motif. The Cytoplasmic segment spans residues 492-557 (EVIKFKLCRC…GQGNFEDFTC (66 aa)).

Belongs to the amiloride-sensitive sodium channel (TC 1.A.6) family. ASIC1 subfamily. As to quaternary structure, homotrimer. Heterotrimer; with other ASIC proteins producing channel with different properties. As to expression, expressed in central nervous system.

The protein resides in the cell membrane. It localises to the postsynaptic cell membrane. The protein localises to the cell projection. It is found in the dendrite. The enzyme catalyses Na(+)(in) = Na(+)(out). It catalyses the reaction K(+)(in) = K(+)(out). The catalysed reaction is Li(+)(in) = Li(+)(out). It carries out the reaction Ca(2+)(in) = Ca(2+)(out). Its activity is regulated as follows. Inhibited by the diuretic drug amiloride. In terms of biological role, forms voltage-independent, pH-gated trimeric sodium channels that act as postsynaptic excitatory receptors in the nervous system, playing a crucial role in regulating synaptic plasticity, learning, and memory. Upon extracellular pH drop this channel elicits transient, fast activating, and completely desensitizing inward currents. Displays high selectivity for sodium ions but can also permit the permeation of other cations. The polypeptide is Acid-sensing ion channel 1B (asic1b) (Danio rerio (Zebrafish)).